Here is a 305-residue protein sequence, read N- to C-terminus: tRNA pseudouridine synthase B (305 aa).

Asp48 (nucleophile) is an active-site residue.

It belongs to the pseudouridine synthase TruB family. Type 1 subfamily.

It catalyses the reaction uridine(55) in tRNA = pseudouridine(55) in tRNA. In terms of biological role, responsible for synthesis of pseudouridine from uracil-55 in the psi GC loop of transfer RNAs. The protein is tRNA pseudouridine synthase B of Pseudomonas putida (strain ATCC 700007 / DSM 6899 / JCM 31910 / BCRC 17059 / LMG 24140 / F1).